Reading from the N-terminus, the 405-residue chain is Protein lin-11 (405 aa).

Glycyl lysine isopeptide (Lys-Gly) (interchain with G-Cter in SUMO) cross-links involve residues K17 and K18. LIM zinc-binding domains lie at 68-124 (CAAC…RRYS) and 127-187 (CAGC…TATK). Over residues 189 to 205 (STPTSIHRPVSNGSECN) the composition is skewed to polar residues. Disordered regions lie at residues 189–208 (STPT…NSDV) and 224–246 (GEGD…GPRT). A DNA-binding region (homeobox) is located at residues 241-300 (RRGPRTTIKAKQLETLKNAFAATPKPTRHIREQLAAETGLNMRVIQVWFQNRRSKERRMK).

As to expression, expressed in ADL, AVJL, AIZL, RICL, RIF and AVG neurons.

Its subcellular location is the nucleus. Probable transcription factor which is required for asymmetric division of vulval blast cells. Involved in olfactory plasticity probably by regulating the expression of transcription factor mbr-1 in RIF neurons. Plays a role in the chemorepulsive response toward ascaroside pheromones mediated by the ADL sensory neurons, probably by regulating E-box motif 5'-CANNTG-3' containing target genes in the ADL neurons. Plays a role in the differentiation of the ADL sensory neurons. The sequence is that of Protein lin-11 (lin-11) from Caenorhabditis elegans.